Consider the following 360-residue polypeptide: Peptide chain release factor 1 (360 aa).

N5-methylglutamine is present on Gln235. Basic and acidic residues predominate over residues 285–295; sequence RQAAEQTDMRR. A disordered region spans residues 285–309; the sequence is RQAAEQTDMRRNLLGSGDRSDKIRT.

It belongs to the prokaryotic/mitochondrial release factor family. Methylated by PrmC. Methylation increases the termination efficiency of RF1.

The protein localises to the cytoplasm. Its function is as follows. Peptide chain release factor 1 directs the termination of translation in response to the peptide chain termination codons UAG and UAA. The polypeptide is Peptide chain release factor 1 (prfA) (Haemophilus influenzae (strain ATCC 51907 / DSM 11121 / KW20 / Rd)).